Consider the following 328-residue polypeptide: D-cysteine desulfhydrase (328 aa).

The residue at position 51 (K51) is an N6-(pyridoxal phosphate)lysine.

This sequence belongs to the ACC deaminase/D-cysteine desulfhydrase family. In terms of assembly, homodimer. Requires pyridoxal 5'-phosphate as cofactor.

It carries out the reaction D-cysteine + H2O = hydrogen sulfide + pyruvate + NH4(+) + H(+). In terms of biological role, catalyzes the alpha,beta-elimination reaction of D-cysteine and of several D-cysteine derivatives. It could be a defense mechanism against D-cysteine. The polypeptide is D-cysteine desulfhydrase (Escherichia coli O7:K1 (strain IAI39 / ExPEC)).